Reading from the N-terminus, the 195-residue chain is Glutamyl-tRNA(Gln) amidotransferase subunit C, mitochondrial (195 aa).

The transit peptide at 1–18 directs the protein to the mitochondrion; that stretch reads MNLSTIGFQVIFKQRLRC.

It belongs to the GatC family. In terms of assembly, subunit of the heterotrimeric GatCAB amidotransferase (AdT) complex, composed of A, B and C subunits.

It localises to the mitochondrion. The catalysed reaction is L-glutamyl-tRNA(Gln) + L-glutamine + ATP + H2O = L-glutaminyl-tRNA(Gln) + L-glutamate + ADP + phosphate + H(+). Its function is as follows. Allows the formation of correctly charged Gln-tRNA(Gln) through the transamidation of misacylated Glu-tRNA(Gln) in the mitochondria. The reaction takes place in the presence of glutamine and ATP through an activated gamma-phospho-Glu-tRNA(Gln). This Brugia malayi (Filarial nematode worm) protein is Glutamyl-tRNA(Gln) amidotransferase subunit C, mitochondrial.